The primary structure comprises 211 residues: ATP phosphoribosyltransferase (211 aa).

This sequence belongs to the ATP phosphoribosyltransferase family. Short subfamily. Heteromultimer composed of HisG and HisZ subunits.

It is found in the cytoplasm. The enzyme catalyses 1-(5-phospho-beta-D-ribosyl)-ATP + diphosphate = 5-phospho-alpha-D-ribose 1-diphosphate + ATP. It participates in amino-acid biosynthesis; L-histidine biosynthesis; L-histidine from 5-phospho-alpha-D-ribose 1-diphosphate: step 1/9. In terms of biological role, catalyzes the condensation of ATP and 5-phosphoribose 1-diphosphate to form N'-(5'-phosphoribosyl)-ATP (PR-ATP). Has a crucial role in the pathway because the rate of histidine biosynthesis seems to be controlled primarily by regulation of HisG enzymatic activity. The polypeptide is ATP phosphoribosyltransferase (Pseudomonas syringae pv. tomato (strain ATCC BAA-871 / DC3000)).